The following is a 165-amino-acid chain: Large ribosomal subunit protein uL10 (165 aa).

It belongs to the universal ribosomal protein uL10 family. In terms of assembly, part of the ribosomal stalk of the 50S ribosomal subunit. The N-terminus interacts with L11 and the large rRNA to form the base of the stalk. The C-terminus forms an elongated spine to which L12 dimers bind in a sequential fashion forming a multimeric L10(L12)X complex.

Forms part of the ribosomal stalk, playing a central role in the interaction of the ribosome with GTP-bound translation factors. The chain is Large ribosomal subunit protein uL10 from Burkholderia cenocepacia (strain HI2424).